The chain runs to 294 residues: Gap junction delta-3 protein (294 aa).

Over methionine 1–leucine 24 the chain is Cytoplasmic. Residues tryptophan 25–phenylalanine 45 form a helical membrane-spanning segment. The Extracellular segment spans residues glutamate 46–arginine 76. Residues phenylalanine 77 to methionine 97 traverse the membrane as a helical segment. The Cytoplasmic segment spans residues histidine 98–tyrosine 136. A helical membrane pass occupies residues leucine 137–leucine 157. Residues tyrosine 158–threonine 188 are Extracellular-facing. The chain crosses the membrane as a helical span at residues valine 189–leucine 209. The Cytoplasmic portion of the chain corresponds to glycine 210–isoleucine 294. The disordered stretch occupies residues glutamate 233–isoleucine 294. Over residues leucine 238–leucine 250 the composition is skewed to pro residues.

Belongs to the connexin family. Delta-type subfamily. In terms of assembly, a connexon is composed of a hexamer of connexins. Interacts with TJP1. Expressed in vascular smooth muscle cells. Found in heart, colon, and artery (at protein level). Found in cerebral cortex, heart, liver, lung, kidney, spleen and testis.

It localises to the cell membrane. The protein resides in the cell junction. It is found in the gap junction. Its function is as follows. One gap junction consists of a cluster of closely packed pairs of transmembrane channels, the connexons, through which materials of low MW diffuse from one cell to a neighboring cell. The chain is Gap junction delta-3 protein (GJD3) from Homo sapiens (Human).